The primary structure comprises 151 residues: Cathelicidin-3 (151 aa).

An N-terminal signal peptide occupies residues 1 to 17; the sequence is MLSCWVLLLALLGGACA. The propeptide occupies 18–122; sequence LPAPLGYSQA…TCVDSMADPV (105 aa). Cystine bridges form between cysteine 75–cysteine 86 and cysteine 97–cysteine 114. A helical membrane pass occupies residues 128 to 148; that stretch reads WPLVPVAINTVAAGINLYKAI.

The protein belongs to the cathelicidin family. In terms of tissue distribution, detected in bone marrow, liver and lung.

It localises to the secreted. The protein resides in the membrane. Functionally, may bind bacterial lipopolysaccharide (LPS). May have antimicrobial activity and play a role in the innate immune response. The protein is Cathelicidin-3 (CATHL3) of Gallus gallus (Chicken).